The following is a 354-amino-acid chain: Transcription factor HHO2 (354 aa).

The span at 93–102 (VQEEEEEDGE) shows a compositional bias: acidic residues. The interval 93 to 112 (VQEEEEEDGEHESSPELVNN) is disordered. A compositionally biased stretch (basic and acidic residues) spans 103 to 112 (HESSPELVNN). The HTH myb-type domain maps to 212 to 272 (THRKQRRCWS…HLQKYRLHTR (61 aa)). Positions 243–268 (PKQIRDHMKVDGLTNDEVKSHLQKYR) form a DNA-binding region, H-T-H motif. The tract at residues 324-354 (VAQSPKRSLERSCNSPAASSSTNTNTSTPVS) is disordered. The span at 337-354 (NSPAASSSTNTNTSTPVS) shows a compositional bias: low complexity.

The protein localises to the nucleus. Probable transcription factor involved in phosphate homeostasis. Involved in the regulation of the developmental response of lateral roots, acquisition and/or mobilization of phosphate and expression of a subset of genes involved in phosphate sensing and signaling pathway. Is a target of the transcription factor PHR1. The protein is Transcription factor HHO2 of Arabidopsis thaliana (Mouse-ear cress).